We begin with the raw amino-acid sequence, 109 residues long: Small ribosomal subunit protein uS17 (109 aa).

Belongs to the universal ribosomal protein uS17 family. Part of the 30S ribosomal subunit.

In terms of biological role, one of the primary rRNA binding proteins, it binds specifically to the 5'-end of 16S ribosomal RNA. This is Small ribosomal subunit protein uS17 from Methanococcus vannielii.